The chain runs to 482 residues: ATP synthase subunit beta (482 aa).

ATP is bound at residue 162–169 (GGAGVGKT).

The protein belongs to the ATPase alpha/beta chains family. In terms of assembly, F-type ATPases have 2 components, CF(1) - the catalytic core - and CF(0) - the membrane proton channel. CF(1) has five subunits: alpha(3), beta(3), gamma(1), delta(1), epsilon(1). CF(0) has four main subunits: a(1), b(1), b'(1) and c(9-12).

The protein localises to the cellular thylakoid membrane. The catalysed reaction is ATP + H2O + 4 H(+)(in) = ADP + phosphate + 5 H(+)(out). In terms of biological role, produces ATP from ADP in the presence of a proton gradient across the membrane. The catalytic sites are hosted primarily by the beta subunits. The sequence is that of ATP synthase subunit beta from Trichormus variabilis (strain ATCC 29413 / PCC 7937) (Anabaena variabilis).